A 558-amino-acid chain; its full sequence is Deleted in azoospermia protein 2 (558 aa).

The segment covering 1 to 10 (MSAANPETPN) has biased composition (polar residues). The disordered stretch occupies residues 1 to 27 (MSAANPETPNSTISREASTQSSSAAAS). Residues 11-27 (STISREASTQSSSAAAS) show a composition bias toward low complexity. The RRM domain occupies 40 to 115 (NTVFVGGIDA…KKLKLGPAIR (76 aa)). 15 consecutive DAZ domains span residues 167–190 (AYSA…YNYQ), 191–214 (EYPT…YNYQ), 215–238 (PFPA…YNYQ), 239–262 (AFPA…YNYQ), 263–286 (PFPA…YNYQ), 287–310 (AFPA…YNYQ), 311–334 (AFPA…YNYQ), 335–358 (AFPA…YNYQ), 359–382 (AFPA…YNYQ), 383–406 (AFPA…YNYQ), 407–430 (AFPA…YNYQ), 431–454 (AFPA…YNYQ), 455–478 (AFPA…YNYQ), 479–502 (AFPA…YNYQ), and 503–526 (AFPA…YNYQ).

Belongs to the RRM DAZ family. In terms of assembly, forms a heterodimer with BOLL and DAZL. Interacts with PUM2, DAZAP1, DAZAP2, DZIP1 and DZIP3. Testis specific.

Its subcellular location is the cytoplasm. It localises to the nucleus. In terms of biological role, RNA-binding protein that plays an essential role in spermatogenesis. May act by binding to the 3'-UTR of mRNAs and regulating their translation. The protein is Deleted in azoospermia protein 2 (DAZ2) of Homo sapiens (Human).